Reading from the N-terminus, the 299-residue chain is Non-structural protein V (299 aa).

Positions 40–91 (SDNPGQERATYKEEKAGGSGLSKPCLSAIGSTEGGAPRIRGQGSGESDDDTE) are disordered. The segment at 110-120 (HYVYDHSGEAV) is interaction with host STAT1. Positions 133–163 (SGLDGDSTLSEGDNESENSDVDIGEPDTEGY) are disordered. Residues 144-160 (GDNESENSDVDIGEPDT) show a composition bias toward acidic residues. 8 residues coordinate Zn(2+): H232, C251, C255, C267, C269, C272, C276, and C279.

Belongs to the paramyxoviruses V protein family. In terms of assembly, interacts with host IFIH1/MDA5 and DHX58/LGP2; these interactions are involved in the inhibition of the host type I interferon signaling pathway. Interacts with host TYK2; this interaction inhibits the type I interferon signaling pathway without affecting the type II pathway. Interacts with host IRF7; this interaction inhibits IRF7 translocation to the nucleus. Interacts with host CHUK. Interacts with host RELA/p65; this interaction inhibits the nuclear translocation of NF-KappaB. Interacts (via N-terminus) with host STAT1 and JAK1; these interactions inhibit STAT1 phosphorylation by Jak1 and thereby the type I interferon signaling pathway. Interacts (via C-terminus) with host STAT2; this interaction is involved in the inhibition of the host type I interferon signaling pathway. Forms a complex with host PPP1CA and PPP1CC; this interaction prevents dephosphorylation of host IFIH1/MDA5 and leads to the inhibition of the host type I interferon signaling pathway. Interacts with host IRF9; this interaction prevents the binding of IRF9 to STAT2 and thereby the type I interferon signaling pathway. Interacts with host RIGI regulatory protein (via CARDs domain) and host TRIM25 (via SPRY domain); these interactions prevent TRIM25-mediated ubiquitination of RIG-I and disrupts downstream RIG-I signaling.

It is found in the host cytoplasm. Functionally, plays an essential role in the inhibition of host immune response. Prevents the establishment of cellular antiviral state by blocking interferon-alpha/beta (IFN-alpha/beta) production and signaling pathway. Interacts with host IFIH1/MDA5 and DHX58/LGP2 to inhibit the transduction pathway involved in the activation of IFN-beta promoter, thus protecting the virus against cell antiviral state. Blocks the type I interferon signaling pathway by interacting with host TYK2 and thereby inhibiting downstream STAT1 and STAT2 phosphorylation. Blocks the type I interferon signaling pathway by disrupting the RIG-I signaling pathway. Moderately affects the type II interferon signaling. Prevents PP1alpha/gamma-mediated dephosphorylation of host IFIH1/MDA5 and thus blocks its activation. The sequence is that of Non-structural protein V (P/V) from Homo sapiens (Human).